Reading from the N-terminus, the 69-residue chain is DNA gyrase inhibitor YacG (69 aa).

Zn(2+) contacts are provided by cysteine 7, cysteine 10, cysteine 26, and cysteine 30.

It belongs to the DNA gyrase inhibitor YacG family. In terms of assembly, interacts with GyrB. Zn(2+) serves as cofactor.

Its function is as follows. Inhibits all the catalytic activities of DNA gyrase by preventing its interaction with DNA. Acts by binding directly to the C-terminal domain of GyrB, which probably disrupts DNA binding by the gyrase. The polypeptide is DNA gyrase inhibitor YacG (Shewanella putrefaciens (strain CN-32 / ATCC BAA-453)).